The primary structure comprises 797 residues: N-acetylneuraminate (7)9-O-acetyltransferase (797 aa).

At 1–18 (MAALAYNLGKREINHYFS) the chain is on the cytoplasmic side. A helical transmembrane segment spans residues 19–39 (VRSAKVLALVAVLLLAACHLA). At 40 to 313 (SRRYRGNDSC…QPRPPLTLIQ (274 aa)) the chain is on the lumenal side. An N-linked (GlcNAc...) asparagine glycan is attached at Asn46. The active-site Acyl-ester intermediate is the Ser94. N-linked (GlcNAc...) asparagine glycosylation is found at Asn175 and Asn187. Residues Asp270 and His273 contribute to the active site. A helical transmembrane segment spans residues 314–334 (KLAACFFTLSIIGYFIFYVIH). Over 335 to 363 (RNAHRKNKPCTDLESGEEKKNIINTPVSS) the chain is Cytoplasmic. The chain crosses the membrane as a helical span at residues 364–384 (LEILLQSFCKLGLIMAYFYMC). Residues 385–395 (DRANLFMKENK) lie on the Lumenal side of the membrane. A helical transmembrane segment spans residues 396–416 (FYTHSSFFIPIIYILVLGVFY). Over 417 to 439 (NENTKETKVLNREQTDEWKGWMQ) the chain is Cytoplasmic. Residues 440–460 (LVILIYHISGASTFLPVYMHI) form a helical membrane-spanning segment. Position 461 (Arg461) is a topological domain, lumenal. A helical transmembrane segment spans residues 462–482 (VLVAAYLFQTGYGHFSYFWIK). Residues 483 to 486 (GDFG) are Cytoplasmic-facing. Residues 487 to 507 (IHRVCQVLFRLNFLVVVLCIV) traverse the membrane as a helical segment. Over 508–513 (MDRPYQ) the chain is Lumenal. A helical membrane pass occupies residues 514 to 534 (FYYFVPLVTVWFMVIYVTLAL). The Cytoplasmic segment spans residues 535–546 (WPQITQKKANGN). A helical transmembrane segment spans residues 547–567 (FFWYLGLLLKLGLLLLCIWFL). The Lumenal portion of the chain corresponds to 568 to 599 (AYSQGAFEKIFSLWPLSKCFELEGSVYEWWFR). Residues 600-620 (WRLDRYVVFHGVLFAFIYLAL) traverse the membrane as a helical segment. At 621 to 638 (QRRQILSEGKGEPLFSNK) the chain is on the cytoplasmic side. A helical transmembrane segment spans residues 639–659 (ISNFLLFVSVVSFLTYSIWAS). Topologically, residues 660 to 671 (SCKNKAECNELH) are lumenal. Residues 672 to 692 (PSVSVVQIVAFILIRNIPGYA) traverse the membrane as a helical segment. Residues 693-698 (RSIYSS) lie on the Cytoplasmic side of the membrane. The helical transmembrane segment at 699-719 (FFAWFGKISLELFICQYHIWL) threads the bilayer. At 720 to 725 (AADTRG) the chain is on the lumenal side. A helical membrane pass occupies residues 726–746 (ILVLIPGNPTLNIIVSTFIFV). Residues 747 to 770 (CVAHEISQITTDLAQVVIPKDNPS) lie on the Cytoplasmic side of the membrane. The chain crosses the membrane as a helical span at residues 771–791 (LFRRLACTIAFFGGVLILSSI). Residues 792–797 (QDKSRL) are Lumenal-facing.

It belongs to the PC-esterase family. CASD1 subfamily. In terms of processing, N-glycosylated. As to expression, ubiquitously expressed.

The protein resides in the golgi apparatus membrane. It carries out the reaction CMP-N-acetyl-beta-neuraminate + acetyl-CoA = CMP-N-acetyl-9-O-acetyl-beta-neuraminate + CoA. The catalysed reaction is a ganglioside GD3 (d18:1(4E)) + acetyl-CoA = a ganglioside Ac-O-7-GD3(d18:1(4E)) + CoA. The enzyme catalyses CMP-N-acetyl-beta-neuraminate + acetyl-CoA = CMP-N-acetyl-7-O-acetyl-beta-neuraminate + CoA. Key enzyme in the biosynthesis of O-acetylated (O-Ac) sialoglycans such as gangliosides O-AcGD3 and O-AcGD2, which affect various processes such as cell-cell interactions, host-pathogen recognition. Catalyzes the transfer of an acetyl group from a donor, the acetyl-coenzyme-A molecule (acetyl-CoA), to the C7/8/9 OH-position of a sialic acid residue. The primary site of O-acetyl group transfer on sialic acid seems to depend on cell type and can be C7, from which the O-acetyl group could subsequently migrate to the C8 and then to the C9 position, or at C9 with possibility of migrating to the C8 and then to the C7 position. Together with ST8SIA1 (GD3 synthase) it increases the levels of ganglioside Ac-O-7-GD3. Can transfer the acetyl group from acetyl-CoA to free sialate (N-acetylneuraminate, Neu5Ac) in vitro, but has preferred substrate specificity for CMP-activated sialate (CMP-Neu5Ac), resulting in the formation of 9-O-acetylated CMP-Neu5Ac (CMP-Neu5,9Ac2). CMP-Neu5,9Ac2 may be used by sialyltransferases as a sialate donor for glycoconjugate acceptors such as ganglioside GD3. O-acetylation at position C9 of ganglioside GD3 can counteract the pro-apoptotic effects of the ganglioside GD3 in tumor cells. This Mus musculus (Mouse) protein is N-acetylneuraminate (7)9-O-acetyltransferase.